Consider the following 207-residue polypeptide: Ribosomal RNA small subunit methyltransferase G (207 aa).

S-adenosyl-L-methionine-binding positions include glycine 73, leucine 78, 124–125 (VE), and arginine 139.

It belongs to the methyltransferase superfamily. RNA methyltransferase RsmG family.

It localises to the cytoplasm. The catalysed reaction is guanosine(527) in 16S rRNA + S-adenosyl-L-methionine = N(7)-methylguanosine(527) in 16S rRNA + S-adenosyl-L-homocysteine. Specifically methylates the N7 position of guanine in position 527 of 16S rRNA. This is Ribosomal RNA small subunit methyltransferase G from Escherichia fergusonii (strain ATCC 35469 / DSM 13698 / CCUG 18766 / IAM 14443 / JCM 21226 / LMG 7866 / NBRC 102419 / NCTC 12128 / CDC 0568-73).